The sequence spans 215 residues: uncharacterized protein (215 aa).

6 helical membrane passes run 21-40, 50-69, 95-117, 122-144, 156-178, and 183-205; these read IIKYLVIFFLFCIISTVLIN, LIFSVICLLISLIGFSSVIF, FFAIFISSTIGLVFVLPIIYVLF, LEIIFFFSSVWMILVLSSSLVVL, ANFVGTFIMPLLIPNIIMTGLIL, and LQLIFIMIGINLVFLPISFFLSS.

The protein belongs to the CcmB/CycW/HelB family.

It is found in the cell membrane. This is an uncharacterized protein from Rickettsia conorii (strain ATCC VR-613 / Malish 7).